We begin with the raw amino-acid sequence, 1164 residues long: DNA-directed RNA polymerase 132 kDa polypeptide (1164 aa).

This sequence belongs to the RNA polymerase beta chain family. In terms of assembly, the DNA-dependent RNA polymerase used for intermediate and late genes expression consists of eight subunits (147) kDa, (133) kDa, (35) kDa, (30) kDa, (22) kDa, (19) kDa, (18) kDa and (7) kDa totalling more than 500 kDa in mass. The same holoenzyme, with the addition of the transcription-specificity factor RAP94, is used for early gene expression.

It localises to the virion. It carries out the reaction RNA(n) + a ribonucleoside 5'-triphosphate = RNA(n+1) + diphosphate. In terms of biological role, part of the DNA-dependent RNA polymerase which catalyzes the transcription of viral DNA into RNA using the four ribonucleoside triphosphates as substrates. Responsible for the transcription of early, intermediate and late genes. DNA-dependent RNA polymerase associates with the early transcription factor (ETF), itself composed of D6 and A7, thereby allowing the early genes transcription. Late transcription, and probably also intermediate transcription, require newly synthesized RNA polymerase. The chain is DNA-directed RNA polymerase 132 kDa polypeptide (RPO132) from Monkeypox virus (strain Zaire-96-I-16) (MPX).